The primary structure comprises 84 residues: Exodeoxyribonuclease 7 small subunit (84 aa).

The protein belongs to the XseB family. As to quaternary structure, heterooligomer composed of large and small subunits.

It localises to the cytoplasm. It catalyses the reaction Exonucleolytic cleavage in either 5'- to 3'- or 3'- to 5'-direction to yield nucleoside 5'-phosphates.. In terms of biological role, bidirectionally degrades single-stranded DNA into large acid-insoluble oligonucleotides, which are then degraded further into small acid-soluble oligonucleotides. The protein is Exodeoxyribonuclease 7 small subunit of Azoarcus sp. (strain BH72).